The sequence spans 506 residues: NAD(P)H-quinone oxidoreductase subunit 2 (506 aa).

A run of 13 helical transmembrane segments spans residues 14–34 (AIIP…VDLA), 42–62 (WAPI…ALQW), 79–99 (LAIA…LISW), 108–128 (PIGE…LLCG), 132–152 (LISI…LSGY), 167–187 (LLVG…LYGL), 206–226 (FITS…IAAV), 240–260 (PTPV…AFAI), 276–296 (LLFT…ALAQ), 302–322 (MLAY…VSGT), 330–350 (VLYL…VILF), 374–394 (LGLS…GFFG), and 409–429 (LLVI…ISVI).

The protein belongs to the complex I subunit 2 family. NDH-1 can be composed of about 15 different subunits; different subcomplexes with different compositions have been identified which probably have different functions.

It localises to the cellular thylakoid membrane. It carries out the reaction a plastoquinone + NADH + (n+1) H(+)(in) = a plastoquinol + NAD(+) + n H(+)(out). The catalysed reaction is a plastoquinone + NADPH + (n+1) H(+)(in) = a plastoquinol + NADP(+) + n H(+)(out). In terms of biological role, NDH-1 shuttles electrons from an unknown electron donor, via FMN and iron-sulfur (Fe-S) centers, to quinones in the respiratory and/or the photosynthetic chain. The immediate electron acceptor for the enzyme in this species is believed to be plastoquinone. Couples the redox reaction to proton translocation, and thus conserves the redox energy in a proton gradient. Cyanobacterial NDH-1 also plays a role in inorganic carbon-concentration. The polypeptide is NAD(P)H-quinone oxidoreductase subunit 2 (Prochlorococcus marinus (strain MIT 9312)).